The chain runs to 887 residues: DNA mismatch repair protein MutS (887 aa).

626–633 contacts ATP; it reads GPNMAGKS.

Belongs to the DNA mismatch repair MutS family.

Functionally, this protein is involved in the repair of mismatches in DNA. It is possible that it carries out the mismatch recognition step. This protein has a weak ATPase activity. This is DNA mismatch repair protein MutS from Methanococcoides burtonii (strain DSM 6242 / NBRC 107633 / OCM 468 / ACE-M).